The chain runs to 1792 residues: BTB/POZ domain-containing protein 8 (1792 aa).

2 BTB domains span residues 58–127 and 206–273; these read TDVT…NIKN and PDID…DIPD. 8 disordered regions span residues 528-554, 581-658, 670-692, 707-768, 788-815, 831-989, 1151-1283, and 1519-1607; these read DKGD…SDSG, SDGL…PRQV, TGQK…SGAR, KPLK…CDSP, SRPV…NNSV, AILK…KPHK, ERTN…SNDR, and SIDS…KSLD. Composition is skewed to polar residues over residues 541-552 and 588-601; these read FSSSQQRKQVSD and GHSS…INKT. Basic and acidic residues-rich tracts occupy residues 602–625 and 640–650; these read LKQD…ELKT and SKTENGDKARL. Positions 724–740 are enriched in polar residues; that stretch reads GPSSRSTDSSMEFSIST. Over residues 744–758 the composition is skewed to basic and acidic residues; it reads DEPKENGSTEEEKPS. Over residues 838–865 the composition is skewed to polar residues; the sequence is TSNGCTAAQQRTKSTPSNLTKTQGSQGE. Low complexity predominate over residues 866–877; that stretch reads SPNSVKSSVSSR. Basic and acidic residues-rich tracts occupy residues 878-891 and 927-939; these read QSDE…HNTT and KKGE…DSKQ. The segment covering 947–956 has biased composition (polar residues); sequence ISKTQPSSQR. Over residues 969-987 the composition is skewed to basic and acidic residues; it reads MFHDVRDNNNKDSVSEQKP. Polar residues-rich tracts occupy residues 1151 to 1160 and 1195 to 1215; these read ERTNGTLNSA and SDVS…PKNM. Residues 1250–1259 show a composition bias toward low complexity; it reads SDTGSATTSS. Residues 1566 to 1594 show a composition bias toward basic and acidic residues; sequence IQQRSKFLDSDVKSQERPCHLDLHQREPN. The span at 1597–1607 shows a compositional bias: polar residues; that stretch reads IPKNSSTKSLD.

In terms of assembly, interacts (via N-terminus) with adapter protein complex AP-2 subunits alpha (AP2A1) and beta (AP2B1). Highly expressed in fetal brain. Weakly expressed in adult brain and prostate.

Its subcellular location is the cell projection. The protein localises to the axon. It localises to the presynapse. The protein resides in the cytoplasmic vesicle. It is found in the clathrin-coated vesicle. Its subcellular location is the nucleus. Involved in clathrin-mediated endocytosis at the synapse. Plays a role in neuronal development and in synaptic vesicle recycling in mature neurons, a process required for normal synaptic transmission. This is BTB/POZ domain-containing protein 8 from Homo sapiens (Human).